A 339-amino-acid chain; its full sequence is Phosphoribosylformylglycinamidine cyclo-ligase (339 aa).

The protein belongs to the AIR synthase family.

The protein resides in the cytoplasm. The catalysed reaction is 2-formamido-N(1)-(5-O-phospho-beta-D-ribosyl)acetamidine + ATP = 5-amino-1-(5-phospho-beta-D-ribosyl)imidazole + ADP + phosphate + H(+). The protein operates within purine metabolism; IMP biosynthesis via de novo pathway; 5-amino-1-(5-phospho-D-ribosyl)imidazole from N(2)-formyl-N(1)-(5-phospho-D-ribosyl)glycinamide: step 2/2. The sequence is that of Phosphoribosylformylglycinamidine cyclo-ligase from Desulfitobacterium hafniense (strain DSM 10664 / DCB-2).